The sequence spans 477 residues: Oleate hydroxylase FAH12 (477 aa).

The interval 26–48 (YESSAAVSPAESPRTSASSTSLS) is disordered. Residues 27 to 48 (ESSAAVSPAESPRTSASSTSLS) show a composition bias toward low complexity. 2 consecutive transmembrane segments (helical) span residues 101–118 (AYVLRDLLCLSTTFYLFH) and 133–153 (FVLWSIYTVLQGLFATGLWVI). Residues 155 to 159 (HECGH) carry the Histidine box-1 motif. The chain crosses the membrane as a helical span at residues 167-187 (FISDLTGWVIHSALLVPYFSW). The short motif at 191 to 195 (HSAHH) is the Histidine box-2 element. 3 helical membrane passes run 234-254 (PIYTALHLVGKQLIGWPSYLM), 299-319 (YIVLSDIGLGLAIAALVYLGN), and 327-347 (AVWYFLPYLWVNHWLVAITFL).

Belongs to the fatty acid desaturase type 1 family.

Its subcellular location is the microsome membrane. The enzyme catalyses (9Z)-octadecenoate + AH2 + O2 = (12R)-hydroxy-(9Z)-octadecenoate + A + H2O. Its pathway is lipid metabolism; monounsaturated fatty acid biosynthesis. Its function is as follows. Oleate hydroxylase involved in the biosynthesis of ricinoleate (12-hydroxy-cis-9-octadecenoate), that is present at high levels in C.purpurea sclerotium tissue. Exhibits delta(12) hydroxylase activity on 16C and 18C monounsaturated fatty acids (i.e. oleic and palmitoleic acids), and, to a lower extent, gamma(3) hydroxylase activity on ricinoleate. This is Oleate hydroxylase FAH12 from Claviceps purpurea (Ergot fungus).